A 123-amino-acid chain; its full sequence is Large ribosomal subunit protein uL14 (123 aa).

Belongs to the universal ribosomal protein uL14 family. In terms of assembly, part of the 50S ribosomal subunit. Forms a cluster with proteins L3 and L19. In the 70S ribosome, L14 and L19 interact and together make contacts with the 16S rRNA in bridges B5 and B8.

Binds to 23S rRNA. Forms part of two intersubunit bridges in the 70S ribosome. The protein is Large ribosomal subunit protein uL14 of Citrobacter koseri (strain ATCC BAA-895 / CDC 4225-83 / SGSC4696).